The following is a 200-amino-acid chain: Dephospho-CoA kinase (200 aa).

The DPCK domain occupies 4-200; it reads TIGLTGSVAT…TFIKRFVKNK (197 aa). 12–17 contacts ATP; the sequence is ATGKST.

It belongs to the CoaE family.

The protein resides in the cytoplasm. The enzyme catalyses 3'-dephospho-CoA + ATP = ADP + CoA + H(+). The protein operates within cofactor biosynthesis; coenzyme A biosynthesis; CoA from (R)-pantothenate: step 5/5. Functionally, catalyzes the phosphorylation of the 3'-hydroxyl group of dephosphocoenzyme A to form coenzyme A. The chain is Dephospho-CoA kinase from Listeria monocytogenes serotype 4b (strain F2365).